A 125-amino-acid chain; its full sequence is Cytochrome c' (125 aa).

Heme c is bound by residues Arg10, Glu67, Cys116, Cys119, and His120.

Homodimer. Post-translationally, binds 1 heme c group covalently per subunit.

Cytochrome c' is the most widely occurring bacterial c-type cytochrome. Cytochromes c' are high-spin proteins and the heme has no sixth ligand. Their exact function is not known. This chain is Cytochrome c', found in Pararhodospirillum photometricum (Rhodospirillum photometricum).